The sequence spans 653 residues: Protease 1 (653 aa).

A signal peptide (or 27) is located at residues 1–20 (MKRICGSLLLLGLSISAALA). Residues 21–205 (APASRPAAFD…RRLAAASGEK (185 aa)) constitute a propeptide that is removed on maturation. Cystine bridges form between Cys-211/Cys-421, Cys-217/Cys-285, and Cys-241/Cys-263. Active-site charge relay system residues include His-262, Asp-318, and Ser-399. In terms of domain architecture, PKD spans 474–553 (NTPPVANFTS…TNTKTGSVTV (80 aa)). Positions 474 to 653 (NTPPVANFTS…AAQRAPGSCG (180 aa)) are cleaved as a propeptide — thr/Ser-rich. Residues 555–653 (GGPGAQTYTN…AAQRAPGSCG (99 aa)) enclose the P/Homo B domain.

This sequence belongs to the peptidase S1 family. Post-translationally, three disulfide bonds are present.

The protein resides in the secreted. It carries out the reaction Preferential cleavage: Lys-|-Xaa, including Lys-|-Pro.. The chain is Protease 1 from Achromobacter lyticus.